The following is a 329-amino-acid chain: 4-diphosphocytidyl-2-C-methyl-D-erythritol kinase (329 aa).

Residue K14 is part of the active site. ATP is bound at residue 117–127 (PSGAGMGGASS). Residue D166 is part of the active site.

Belongs to the GHMP kinase family. IspE subfamily.

The enzyme catalyses 4-CDP-2-C-methyl-D-erythritol + ATP = 4-CDP-2-C-methyl-D-erythritol 2-phosphate + ADP + H(+). Its pathway is isoprenoid biosynthesis; isopentenyl diphosphate biosynthesis via DXP pathway; isopentenyl diphosphate from 1-deoxy-D-xylulose 5-phosphate: step 3/6. Catalyzes the phosphorylation of the position 2 hydroxy group of 4-diphosphocytidyl-2C-methyl-D-erythritol. The chain is 4-diphosphocytidyl-2-C-methyl-D-erythritol kinase from Rhodopirellula baltica (strain DSM 10527 / NCIMB 13988 / SH1).